We begin with the raw amino-acid sequence, 98 residues long: UPF0235 protein Pmen_4153 (98 aa).

It belongs to the UPF0235 family.

The chain is UPF0235 protein Pmen_4153 from Ectopseudomonas mendocina (strain ymp) (Pseudomonas mendocina).